The following is a 322-amino-acid chain: uncharacterized protein (322 aa).

This is an uncharacterized protein from Aquifex aeolicus (strain VF5).